Consider the following 401-residue polypeptide: Nuclear hormone receptor family member nhr-65 (401 aa).

The nuclear receptor DNA-binding region spans 10-79; the sequence is PERCKVCGDT…AGMSSENFQF (70 aa). 2 consecutive NR C4-type zinc fingers follow at residues 13 to 33 and 49 to 67; these read CKVC…CRAC and CENH…LQRC. The NR LBD domain maps to 132 to 398; sequence KAEKLIEFGS…FSHPEFIQDA (267 aa).

Belongs to the nuclear hormone receptor family.

It localises to the nucleus. Functionally, orphan nuclear receptor. The protein is Nuclear hormone receptor family member nhr-65 (nhr-65) of Caenorhabditis elegans.